The chain runs to 678 residues: Sulfoquinovosidase (678 aa).

A 6-sulfo-alpha-D-quinovosyldiacylglycerol contacts are provided by Q288, R301, V302, and W304. The active-site Nucleophile is D405. E408 is an active-site residue. D472 serves as the catalytic Proton donor. Residue H537 participates in a 6-sulfo-alpha-D-quinovosyldiacylglycerol binding.

This sequence belongs to the glycosyl hydrolase 31 family.

It carries out the reaction a 6-sulfo-alpha-D-quinovosyldiacylglycerol + H2O = 6-sulfo-alpha-D-quinovose + a 1,2-diacyl-sn-glycerol. It catalyses the reaction 3-(6-sulfo-alpha-D-quinovosyl)glycerol + H2O = 6-sulfo-alpha-D-quinovose + glycerol. It functions in the pathway glycolipid metabolism. Its activity is regulated as follows. Is inactivated in vitro by the mechanism-based inactivator 5-fluoro-beta-L-idopyranosyl fluoride (5FIdoF) that yields a covalent glycosyl-enzyme complex with the active site nucleophile Asp-405. Functionally, catalyzes the hydrolysis of sulfoquinovosyl diacylglycerides (SQDG) to sulfoquinovose (SQ), which is then degraded by E.coli through the SQ Embden-Meyerhof-Parnas (SQ-EMP) sulfoglycolysis pathway as a source of carbon and sulfur. Therefore, is likely involved in the utilization of the sulfoquinovose headgroup found in ubiquitous plant sulfolipids. Is also able to hydrolyze simple sulfoquinovosides such as sulfoquinovosyl glycerol (SQGro). In vitro, can use the substrate analog para-nitrophenyl alpha-sulfoquinovoside (PNPSQ), but shows no detectable activity toward 4-nitrophenyl alpha-D-glucopyranoside (PNPGlc). Is a retaining glycoside hydrolase, since it forms the alpha anomer of SQ. Also exhibits some alpha-glucosidase activity against alpha-glucosyl fluoride in vitro, although natural substrates, such as alpha-glucobioses are scarcely hydrolyzed. The chain is Sulfoquinovosidase from Escherichia coli (strain K12).